The following is a 168-amino-acid chain: MNIYVEANPYLHDKYSKYADEKYKREGNPFVSFPIHFDDIPSGAKTLALTFIDHDAIPVCGFSWIHWTAANIPAYIGELPEHASEERQDLMIQGQNSFASPLAGSNDPKVIHQYCGPTPPDKDHAYTLTVYALDAELNLQPGFYLNELYQEMKEHILAETSIELLARV.

This is an uncharacterized protein from Bacillus subtilis (strain 168).